The sequence spans 49 residues: Large ribosomal subunit protein bL33 (49 aa).

Belongs to the bacterial ribosomal protein bL33 family.

This chain is Large ribosomal subunit protein bL33, found in Caldanaerobacter subterraneus subsp. tengcongensis (strain DSM 15242 / JCM 11007 / NBRC 100824 / MB4) (Thermoanaerobacter tengcongensis).